We begin with the raw amino-acid sequence, 553 residues long: Putative ABC transporter ATP-binding protein BCE_3323 (553 aa).

ABC transporter domains are found at residues alanine 7 to phenylalanine 245 and leucine 295 to arginine 527. ATP-binding positions include glycine 41–threonine 48 and glycine 329–serine 336.

Belongs to the ABC transporter superfamily.

The protein localises to the cell membrane. Its function is as follows. Probably part of an ABC transporter complex. Responsible for energy coupling to the transport system. The chain is Putative ABC transporter ATP-binding protein BCE_3323 from Bacillus cereus (strain ATCC 10987 / NRS 248).